The primary structure comprises 443 residues: Phosphoglucosamine mutase (443 aa).

The Phosphoserine intermediate role is filled by Ser101. Positions 101, 239, 241, and 243 each coordinate Mg(2+). At Ser101 the chain carries Phosphoserine.

Belongs to the phosphohexose mutase family. It depends on Mg(2+) as a cofactor. Activated by phosphorylation.

The enzyme catalyses alpha-D-glucosamine 1-phosphate = D-glucosamine 6-phosphate. Functionally, catalyzes the conversion of glucosamine-6-phosphate to glucosamine-1-phosphate. This chain is Phosphoglucosamine mutase, found in Francisella tularensis subsp. tularensis (strain WY96-3418).